Reading from the N-terminus, the 424-residue chain is Enolase (424 aa).

Gln-162 lines the (2R)-2-phosphoglycerate pocket. The active-site Proton donor is the Glu-204. 3 residues coordinate Mg(2+): Asp-241, Glu-284, and Asp-311. 4 residues coordinate (2R)-2-phosphoglycerate: Lys-336, Arg-365, Ser-366, and Lys-387. The active-site Proton acceptor is Lys-336.

This sequence belongs to the enolase family. Mg(2+) serves as cofactor.

The protein resides in the cytoplasm. Its subcellular location is the secreted. It is found in the cell surface. It catalyses the reaction (2R)-2-phosphoglycerate = phosphoenolpyruvate + H2O. Its pathway is carbohydrate degradation; glycolysis; pyruvate from D-glyceraldehyde 3-phosphate: step 4/5. Its function is as follows. Catalyzes the reversible conversion of 2-phosphoglycerate (2-PG) into phosphoenolpyruvate (PEP). It is essential for the degradation of carbohydrates via glycolysis. The polypeptide is Enolase (Sinorhizobium medicae (strain WSM419) (Ensifer medicae)).